Reading from the N-terminus, the 685-residue chain is Kinesin-like protein KIP2 (685 aa).

Disordered regions lie at residues 11–46 (EHVG…GPAQ) and 63–101 (SRPS…SGAS). Residues 86 to 101 (GSPQSPDAPSSASGAS) show a composition bias toward low complexity. A Kinesin motor domain is found at 113–446 (NVSVAIRIKP…VRFASRAKNI (334 aa)). 185–192 (GMTGSGKT) is a binding site for ATP. 2 coiled-coil regions span residues 464–486 (IIQN…RRSA) and 520–663 (LEVE…SALS). The segment at 485–510 (SAAAPSGNGSTSPLDSPGVGGTSLSE) is disordered.

It belongs to the TRAFAC class myosin-kinesin ATPase superfamily. Kinesin family.

It localises to the cytoplasm. It is found in the cytoskeleton. Functionally, required for assembly of the mitotic spindle. This is Kinesin-like protein KIP2 (KIP2) from Eremothecium gossypii (strain ATCC 10895 / CBS 109.51 / FGSC 9923 / NRRL Y-1056) (Yeast).